A 736-amino-acid polypeptide reads, in one-letter code: Exo-oligoalginate lyase (736 aa).

An N-terminal signal peptide occupies residues 1–23 (MLSVNTIKNTLLAAVLVSVPATA). Residues K136, 146–149 (QSLN), K198, H202, and 257–260 (YYQR) contribute to the substrate site. Y258 acts as the Proton donor in catalysis. H413 (proton acceptor) is an active-site residue. Zn(2+) contacts are provided by H415 and D433. R438 lines the substrate pocket. H464 serves as a coordination point for Zn(2+). A substrate-binding site is contributed by E667.

It belongs to the polysaccharide lyase 17 family. In terms of assembly, homodimer. The cofactor is Zn(2+).

The protein resides in the periplasm. The enzyme catalyses Cleavage of 4-deoxy-alpha-L-erythro-hex-4-enopyranuronoside oligosaccharides into 4-deoxy-alpha-L-erythro-hex-4-enopyranuronate monosaccharides.. In terms of biological role, catalyzes the depolymerization of alginate through an exolytic mode of action, via a beta-elimination mechanism. Preferentially acts on oligoalginates with degrees of polymerization higher than 2 to produce the alginate monomer, 4-deoxy-L-erythro-5-hexoseulose uronic acid. This is Exo-oligoalginate lyase from Saccharophagus degradans (strain 2-40 / ATCC 43961 / DSM 17024).